Reading from the N-terminus, the 604-residue chain is Aspartate--tRNA(Asp/Asn) ligase (604 aa).

Glutamate 175 lines the L-aspartate pocket. The interval 199 to 202 (QQFK) is aspartate. Arginine 221 and histidine 456 together coordinate L-aspartate. 221–223 (RDE) serves as a coordination point for ATP. Residue glutamate 496 participates in ATP binding. Arginine 503 serves as a coordination point for L-aspartate. 548–551 (GVDR) provides a ligand contact to ATP.

It belongs to the class-II aminoacyl-tRNA synthetase family. Type 1 subfamily. In terms of assembly, homodimer.

The protein resides in the cytoplasm. The catalysed reaction is tRNA(Asx) + L-aspartate + ATP = L-aspartyl-tRNA(Asx) + AMP + diphosphate. In terms of biological role, aspartyl-tRNA synthetase with relaxed tRNA specificity since it is able to aspartylate not only its cognate tRNA(Asp) but also tRNA(Asn). Reaction proceeds in two steps: L-aspartate is first activated by ATP to form Asp-AMP and then transferred to the acceptor end of tRNA(Asp/Asn). In Methylorubrum extorquens (strain CM4 / NCIMB 13688) (Methylobacterium extorquens), this protein is Aspartate--tRNA(Asp/Asn) ligase.